Here is a 507-residue protein sequence, read N- to C-terminus: 25-hydroxyvitamin D-1 alpha hydroxylase, mitochondrial (507 aa).

Cysteine 454 provides a ligand contact to heme.

Belongs to the cytochrome P450 family. It depends on heme as a cofactor. Kidney.

It localises to the mitochondrion membrane. It catalyses the reaction calcidiol + 2 reduced [adrenodoxin] + O2 + 2 H(+) = calcitriol + 2 oxidized [adrenodoxin] + H2O. The enzyme catalyses secalciferol + 2 reduced [adrenodoxin] + O2 + 2 H(+) = calcitetrol + 2 oxidized [adrenodoxin] + H2O. It carries out the reaction 25-hydroxy-24-oxocalciol + 2 reduced [adrenodoxin] + O2 + 2 H(+) = (1S)-1,25-dihydroxy-24-oxocalciol + 2 oxidized [adrenodoxin] + H2O. The catalysed reaction is 25-hydroxyvitamin D2 + 2 reduced [adrenodoxin] + O2 + 2 H(+) = 1alpha,25-dihydroxyvitamin D2 + 2 oxidized [adrenodoxin] + H2O. The protein operates within hormone biosynthesis; vitamin D biosynthesis. Activated by cardiolipin and dioleoyl phosphatidylethanolamine (DOPE), phospholipids found in the inner mitochondrial membrane. Inhibited by high substrate concentration. A cytochrome P450 monooxygenase involved in vitamin D metabolism and in calcium and phosphorus homeostasis. Catalyzes the rate-limiting step in the activation of vitamin D in the kidney, namely the hydroxylation of 25-hydroxyvitamin D3/calcidiol at the C1-alpha position to form the hormonally active form of vitamin D3, 1alpha,25-dihydroxyvitamin D3/calcitriol that acts via the vitamin D receptor (VDR). Has 1-alpha-hydroxylase activity on vitamin D intermediates of the CYP24A1-mediated inactivation pathway. Converts 24R,25-dihydroxyvitamin D3/secalciferol to 1-alpha,24,25-trihydroxyvitamin D3, an active ligand of VDR. Also active on 25-hydroxyvitamin D2. Mechanistically, uses molecular oxygen inserting one oxygen atom into a substrate, and reducing the second into a water molecule, with two electrons provided by NADPH via FDXR/adrenodoxin reductase and FDX1/adrenodoxin. The polypeptide is 25-hydroxyvitamin D-1 alpha hydroxylase, mitochondrial (Cyp27b1) (Mus musculus (Mouse)).